A 152-amino-acid polypeptide reads, in one-letter code: Endoribonuclease YbeY (152 aa).

Zn(2+) is bound by residues H113, H117, and H123.

It belongs to the endoribonuclease YbeY family. Zn(2+) serves as cofactor.

It is found in the cytoplasm. Its function is as follows. Single strand-specific metallo-endoribonuclease involved in late-stage 70S ribosome quality control and in maturation of the 3' terminus of the 16S rRNA. The chain is Endoribonuclease YbeY from Acidovorax sp. (strain JS42).